The following is a 453-amino-acid chain: MGENDPPAAEAPFSFRSLFGLDDLKISPVAPDGDAVAAQILSLLPLKFFPIIVIGIIALILALAIGLGIHFDCSGKYRCHSSFKCIELTARCDGVSDCKNAEDEYRCVRVSGQRAALQVFTAAAWRTMCSDDWKSHYAKIACAQLGFPSYVSSDHLRVDALEEQFQGDFVSINHLLSDDKVTALHHSVYMREGCTSGHVVTLKCSACGTRTGYSPRIVGGNMSSLTQWPWQVSLQFQGYHLCGGSIITPLWIVTAAHCVYDLYHPKSWTVQVGLVSLMDSPVPSHLVEKIIYHSKYKPKRLGNDIALMKLSEPLTFDETIQPICLPNSEENFPDGKLCWTSGWGATEDGGDASPVLNHAAVPLISNKICNHRDVYGGIISPSMLCAGYLKGGVDSCQGDSGGPLVCQERRLWKLVGATSFGIGCAEVNKPGVYTRITSFLDWIHEQLERDLKT.

The Cytoplasmic portion of the chain corresponds to 1–48 (MGENDPPAAEAPFSFRSLFGLDDLKISPVAPDGDAVAAQILSLLPLKF). A helical; Signal-anchor for type II membrane protein transmembrane segment spans residues 49-69 (FPIIVIGIIALILALAIGLGI). At 70-453 (HFDCSGKYRC…HEQLERDLKT (384 aa)) the chain is on the extracellular side. In terms of domain architecture, LDL-receptor class A spans 72–108 (DCSGKYRCHSSFKCIELTARCDGVSDCKNAEDEYRCV). 10 disulfides stabilise this stretch: Cys73–Cys85, Cys79–Cys98, Cys92–Cys107, Cys129–Cys194, Cys142–Cys204, Cys207–Cys324, Cys242–Cys258, Cys338–Cys406, Cys369–Cys385, and Cys396–Cys424. An SRCR domain is found at 104–205 (EYRCVRVSGQ…SGHVVTLKCS (102 aa)). A Peptidase S1 domain is found at 217 to 448 (IVGGNMSSLT…FLDWIHEQLE (232 aa)). N-linked (GlcNAc...) asparagine glycosylation is present at Asn221. Catalysis depends on charge relay system residues His257 and Asp304. The Charge relay system role is filled by Ser400.

Belongs to the peptidase S1 family. Undergoes autoproteolytic activation. In terms of tissue distribution, strongly expressed in liver, cochlea, brain, cerebellum, spleen, lung, and muscle and at a lower degree in retina, kidney, and heart. Expressed in the spiral ganglion, the cells supporting the organ of Corti and the stria vascularis. Isoform 2 is strongly expressed only in the cochlea with very faint expression in the cerebellum, spleen and muscle.

The protein resides in the endoplasmic reticulum membrane. Its function is as follows. Probable serine protease that plays a role in hearing. Acts as a permissive factor for cochlear hair cell survival and activation at the onset of hearing and is required for saccular hair cell survival. Activates ENaC (in vitro). The protein is Transmembrane protease serine 3 (Tmprss3) of Mus musculus (Mouse).